The primary structure comprises 98 residues: UPF0213 protein LACR_2011 (98 aa).

Residues 2–79 form the GIY-YIG domain; the sequence is NTHFTYVLQC…KLVRQQKLKL (78 aa).

The protein belongs to the UPF0213 family.

This is UPF0213 protein LACR_2011 from Lactococcus lactis subsp. cremoris (strain SK11).